We begin with the raw amino-acid sequence, 106 residues long: MKVLVVVALLVTLISYSSSEGIDDPEADELLSLMANEQTRKECIPKHHECTSNKHGCCRGNFFKYKCQCTTVVTQDGEQTERCFCGTPPHHKAAELVVGFGKKIFG.

The N-terminal stretch at 1-19 (MKVLVVVALLVTLISYSSS) is a signal peptide. Residues 20–40 (EGIDDPEADELLSLMANEQTR) constitute a propeptide that is removed on maturation. Disulfide bonds link Cys43/Cys58, Cys50/Cys67, Cys57/Cys85, and Cys69/Cys83.

This sequence belongs to the neurotoxin 19 (CSTX) family. 04 (U1-Lctx) subfamily. As to expression, expressed by the venom gland.

The protein localises to the secreted. This chain is U1-lycotoxin-Ls1b, found in Lycosa singoriensis (Wolf spider).